The following is a 129-amino-acid chain: Phenazine antibiotic resistance protein EhpR (129 aa).

In terms of domain architecture, VOC spans 10–128; the sequence is TPNLQLVYVS…DGHIIRVCPL (119 aa). Residues 42–43 and tryptophan 57 each bind D-alanylgriseoluteate; that span reads RY.

In terms of assembly, homodimer.

Functionally, required for resistance to the phenazine antibiotic D-alanylgriseoluteic acid (AGA), an antibiotic produced by E.agglomerans itself, and thus protects the bacterium against phenazine toxicity. Probably binds AGA and acts as a chaperone that works in tandem with a membrane transporter for subsequent antibiotic secretion. In Enterobacter agglomerans (Erwinia herbicola), this protein is Phenazine antibiotic resistance protein EhpR.